Consider the following 430-residue polypeptide: Glutamate-1-semialdehyde 2,1-aminomutase 2 (430 aa).

Position 269 is an N6-(pyridoxal phosphate)lysine (Lys-269).

It belongs to the class-III pyridoxal-phosphate-dependent aminotransferase family. HemL subfamily. Homodimer. Pyridoxal 5'-phosphate serves as cofactor.

It is found in the cytoplasm. It catalyses the reaction (S)-4-amino-5-oxopentanoate = 5-aminolevulinate. The protein operates within porphyrin-containing compound metabolism; protoporphyrin-IX biosynthesis; 5-aminolevulinate from L-glutamyl-tRNA(Glu): step 2/2. The chain is Glutamate-1-semialdehyde 2,1-aminomutase 2 from Bacillus pumilus (strain SAFR-032).